Here is a 162-residue protein sequence, read N- to C-terminus: Succinate dehydrogenase assembly factor 2, mitochondrial (162 aa).

Residues 1–35 constitute a mitochondrion transit peptide; sequence MHNMFPALTKTLSLQGYKIINSQTGSAAWSCGRRW.

Belongs to the SDHAF2 family. As to quaternary structure, interacts with SDH1 within the SDH catalytic dimer.

The protein resides in the mitochondrion matrix. Its function is as follows. Plays an essential role in the assembly of succinate dehydrogenase (SDH), an enzyme complex (also referred to as respiratory complex II) that is a component of both the tricarboxylic acid (TCA) cycle and the mitochondrial electron transport chain, and which couples the oxidation of succinate to fumarate with the reduction of ubiquinone (coenzyme Q) to ubiquinol. Required for flavinylation (covalent attachment of FAD) of the flavoprotein subunit SDH1 of the SDH catalytic dimer. It is unclear whether it participates in the chemistry of FAD attachment (enzymatic function) or acts as a chaperone that maintains SDH1 in a conformation that is susceptible to autocatalytic FAD attachment. Does not bind FAD or FADH(2) in vitro. Involved in sporulation. Required for the full activation of the early meiotic inducer IME1. This is Succinate dehydrogenase assembly factor 2, mitochondrial from Saccharomyces cerevisiae (strain ATCC 204508 / S288c) (Baker's yeast).